The following is a 487-amino-acid chain: Beta-barrel assembly-enhancing protease (487 aa).

The first 27 residues, 1 to 27, serve as a signal peptide directing secretion; the sequence is MFRQLKKNLVATLIAALALGQVAPAFA. Histidine 136 is a binding site for Zn(2+). Residue glutamate 137 is part of the active site. Zn(2+) is bound by residues histidine 140 and glutamate 201. Aspartate 205 serves as the catalytic Proton donor. 2 TPR repeats span residues 309–342 and 427–460; these read HAAQ…EPNN and DQEL…AKLG.

This sequence belongs to the peptidase M48 family. BepA subfamily. Zn(2+) serves as cofactor.

The protein localises to the periplasm. In terms of biological role, functions both as a chaperone and a metalloprotease. Maintains the integrity of the outer membrane by promoting either the assembly or the elimination of outer membrane proteins, depending on their folding state. The protein is Beta-barrel assembly-enhancing protease of Salmonella typhi.